A 285-amino-acid polypeptide reads, in one-letter code: UPF0014 membrane protein STAR2 (285 aa).

The next 7 helical transmembrane spans lie at 30 to 50 (FLVG…AVAL), 64 to 84 (YAMA…QFIF), 88 to 108 (SAAW…YTAG), 119 to 139 (HIAA…LVAL), 148 to 168 (YIIP…GVTM), 203 to 225 (SLVI…ALPG), and 240 to 262 (AIQL…SILS).

Belongs to the UPF0014 family. As to quaternary structure, interacts with STAR2. In terms of tissue distribution, expressed in roots.

The protein resides in the membrane. Functionally, associates with STAR2 to form a functional transmembrane ABC transporter required for detoxification of aluminum (Al) in roots. Can specifically transport UDP-glucose. The polypeptide is UPF0014 membrane protein STAR2 (Oryza sativa subsp. japonica (Rice)).